The primary structure comprises 340 residues: Protein-tyrosine-phosphatase PTP1 (340 aa).

Positions 58 to 326 (IAHEFTGLQA…FFCYNAIVDE (269 aa)) constitute a Tyrosine-protein phosphatase domain. Residues Asp-234, 265 to 271 (CSAGIGR), and Gln-311 each bind substrate. Cys-265 (phosphocysteine intermediate) is an active-site residue.

As to quaternary structure, interacts with MPK6. Interacts with KIN10. Phosphorylated by KIN10. In terms of tissue distribution, expressed in roots, stems and flowers, and at low levels in leaves.

Its subcellular location is the cytoplasm. It is found in the cytosol. The protein resides in the nucleus. It carries out the reaction O-phospho-L-tyrosyl-[protein] + H2O = L-tyrosyl-[protein] + phosphate. With respect to regulation, inhibited by hydrogen peroxide. In terms of biological role, protein-tyrosine-phosphatase that dephosphorylates and probably inhibits MPK6 in non-oxidative stress conditions. In association with MKP1, represses salicylic acid (SA) and camalexin biosynthesis, thus modulating defense response. May also repress MPK3. Dephosphorylates and inactivates MPK4 in vitro. The protein is Protein-tyrosine-phosphatase PTP1 (PTP1) of Arabidopsis thaliana (Mouse-ear cress).